A 60-amino-acid chain; its full sequence is Large ribosomal subunit protein bL32 (60 aa).

The disordered stretch occupies residues 1-60; that stretch reads MAVQQNKKSPSKRGMHRSHNALTVPGIAVESTTGETHLRHHISPTGFYRGRKVLKTKSEA. 2 stretches are compositionally biased toward basic residues: residues 9-19 and 49-60; these read SPSKRGMHRSH and RGRKVLKTKSEA.

The protein belongs to the bacterial ribosomal protein bL32 family.

This Polaromonas sp. (strain JS666 / ATCC BAA-500) protein is Large ribosomal subunit protein bL32.